The chain runs to 137 residues: Phosphoribosyl-ATP pyrophosphatase (137 aa).

Residues 114–124 are compositionally biased toward basic and acidic residues; the sequence is EGTSGIEEKAL. The segment at 114–137 is disordered; that stretch reads EGTSGIEEKALRKSLQRAAEEAQP.

It belongs to the PRA-PH family.

The protein localises to the cytoplasm. The enzyme catalyses 1-(5-phospho-beta-D-ribosyl)-ATP + H2O = 1-(5-phospho-beta-D-ribosyl)-5'-AMP + diphosphate + H(+). It functions in the pathway amino-acid biosynthesis; L-histidine biosynthesis; L-histidine from 5-phospho-alpha-D-ribose 1-diphosphate: step 2/9. The polypeptide is Phosphoribosyl-ATP pyrophosphatase (Paracidovorax citrulli (strain AAC00-1) (Acidovorax citrulli)).